Reading from the N-terminus, the 56-residue chain is uncharacterized protein (56 aa).

A helical membrane pass occupies residues 30–52; that stretch reads IKIGIICVIITWAIFSINHHHTI.

The protein resides in the membrane. This is an uncharacterized protein from Dictyostelium discoideum (Social amoeba).